The primary structure comprises 115 residues: Large ribosomal subunit protein uL24 (115 aa).

The protein belongs to the universal ribosomal protein uL24 family. In terms of assembly, part of the 50S ribosomal subunit.

One of two assembly initiator proteins, it binds directly to the 5'-end of the 23S rRNA, where it nucleates assembly of the 50S subunit. Its function is as follows. One of the proteins that surrounds the polypeptide exit tunnel on the outside of the subunit. This is Large ribosomal subunit protein uL24 from Synechocystis sp. (strain ATCC 27184 / PCC 6803 / Kazusa).